Consider the following 367-residue polypeptide: Ferrochelatase (367 aa).

Residues H226 and E307 each coordinate Fe cation.

Belongs to the ferrochelatase family.

It is found in the cytoplasm. The enzyme catalyses heme b + 2 H(+) = protoporphyrin IX + Fe(2+). The protein operates within porphyrin-containing compound metabolism; protoheme biosynthesis; protoheme from protoporphyrin-IX: step 1/1. Its function is as follows. Catalyzes the ferrous insertion into protoporphyrin IX. The polypeptide is Ferrochelatase (Burkholderia pseudomallei (strain 668)).